Reading from the N-terminus, the 68-residue chain is Conotoxin Cal14.13c (68 aa).

The first 20 residues, 1-20 (MKLCVVXVLLMLAMPFNGGE), serve as a signal peptide directing secretion. The propeptide occupies 21 to 68 (ASRFFNQHARSQRSGMKTRGIWCDPPCPEGETCRGGECSDEFNGDLGG). Leu66 carries the leucine amide modification.

In terms of processing, contains 2 disulfide bonds. As to expression, expressed by the venom duct.

The protein resides in the secreted. Its function is as follows. Probable neurotoxin with unknown target. Possibly targets ion channels. The sequence is that of Conotoxin Cal14.13c from Californiconus californicus (California cone).